The primary structure comprises 515 residues: Methionine--tRNA ligase (515 aa).

The 'HIGH' region signature appears at 13–23; that stretch reads AYPNGKPHIGH. Residues 300–304 carry the 'KMSKS' region motif; it reads KMSKS. Residue lysine 303 participates in ATP binding.

It belongs to the class-I aminoacyl-tRNA synthetase family. MetG type 2B subfamily. In terms of assembly, monomer.

It localises to the cytoplasm. It catalyses the reaction tRNA(Met) + L-methionine + ATP = L-methionyl-tRNA(Met) + AMP + diphosphate. Is required not only for elongation of protein synthesis but also for the initiation of all mRNA translation through initiator tRNA(fMet) aminoacylation. In Brucella suis biovar 1 (strain 1330), this protein is Methionine--tRNA ligase.